The following is a 227-amino-acid chain: Phosphoribosylformylglycinamidine synthase subunit PurQ (227 aa).

One can recognise a Glutamine amidotransferase type-1 domain in the interval 3–225; that stretch reads FAVIVFPGSN…LRNWRESHVV (223 aa). The active-site Nucleophile is the C86. Active-site residues include H194 and E196.

Part of the FGAM synthase complex composed of 1 PurL, 1 PurQ and 2 PurS subunits.

The protein localises to the cytoplasm. It carries out the reaction N(2)-formyl-N(1)-(5-phospho-beta-D-ribosyl)glycinamide + L-glutamine + ATP + H2O = 2-formamido-N(1)-(5-O-phospho-beta-D-ribosyl)acetamidine + L-glutamate + ADP + phosphate + H(+). The enzyme catalyses L-glutamine + H2O = L-glutamate + NH4(+). The protein operates within purine metabolism; IMP biosynthesis via de novo pathway; 5-amino-1-(5-phospho-D-ribosyl)imidazole from N(2)-formyl-N(1)-(5-phospho-D-ribosyl)glycinamide: step 1/2. In terms of biological role, part of the phosphoribosylformylglycinamidine synthase complex involved in the purines biosynthetic pathway. Catalyzes the ATP-dependent conversion of formylglycinamide ribonucleotide (FGAR) and glutamine to yield formylglycinamidine ribonucleotide (FGAM) and glutamate. The FGAM synthase complex is composed of three subunits. PurQ produces an ammonia molecule by converting glutamine to glutamate. PurL transfers the ammonia molecule to FGAR to form FGAM in an ATP-dependent manner. PurS interacts with PurQ and PurL and is thought to assist in the transfer of the ammonia molecule from PurQ to PurL. This Halalkalibacterium halodurans (strain ATCC BAA-125 / DSM 18197 / FERM 7344 / JCM 9153 / C-125) (Bacillus halodurans) protein is Phosphoribosylformylglycinamidine synthase subunit PurQ.